The chain runs to 368 residues: Agmatine deiminase (368 aa).

Cys-357 acts as the Amidino-cysteine intermediate in catalysis.

This sequence belongs to the agmatine deiminase family. As to quaternary structure, homodimer.

The catalysed reaction is agmatine + H2O = N-carbamoylputrescine + NH4(+). It participates in amine and polyamine biosynthesis; putrescine biosynthesis via agmatine pathway; N-carbamoylputrescine from agmatine: step 1/1. In terms of biological role, mediates the hydrolysis of agmatine into N-carbamoylputrescine in the arginine decarboxylase (ADC) pathway of putrescine biosynthesis, a basic polyamine. In Pseudomonas fluorescens (strain SBW25), this protein is Agmatine deiminase.